The chain runs to 389 residues: PqqA peptide cyclase (389 aa).

The Radical SAM core domain occupies Val-19 to Ala-234. Positions 33, 37, and 40 each coordinate [4Fe-4S] cluster.

This sequence belongs to the radical SAM superfamily. PqqE family. In terms of assembly, interacts with PqqD. The interaction is necessary for activity of PqqE. The cofactor is [4Fe-4S] cluster.

It catalyses the reaction [PQQ precursor protein] + S-adenosyl-L-methionine = E-Y cross-linked-[PQQ precursor protein] + 5'-deoxyadenosine + L-methionine + H(+). Its pathway is cofactor biosynthesis; pyrroloquinoline quinone biosynthesis. Functionally, catalyzes the cross-linking of a glutamate residue and a tyrosine residue in the PqqA protein as part of the biosynthesis of pyrroloquinoline quinone (PQQ). The sequence is that of PqqA peptide cyclase from Pseudomonas syringae pv. tomato (strain ATCC BAA-871 / DC3000).